The following is a 212-amino-acid chain: Ribosomal RNA small subunit methyltransferase G (212 aa).

S-adenosyl-L-methionine is bound by residues glycine 73, phenylalanine 78, 96–98, 124–125, and arginine 141; these read ESS and VE.

Belongs to the methyltransferase superfamily. RNA methyltransferase RsmG family.

The protein localises to the cytoplasm. Specifically methylates the N7 position of a guanine in 16S rRNA. In Aster yellows witches'-broom phytoplasma (strain AYWB), this protein is Ribosomal RNA small subunit methyltransferase G.